Here is a 476-residue protein sequence, read N- to C-terminus: WD repeat, SAM and U-box domain-containing protein 1 (476 aa).

WD repeat units follow at residues 10 to 47, 52 to 91, 95 to 134, 137 to 176, 178 to 227, 237 to 276, and 279 to 318; these read DHSDDVNCCAFSSSCLATCSLDKTIRIYSLNDFTELPY, GHTYAVHCCCFSPSGHTLASCSTDGATIIWDTSDGRMLAV, PTGSPVRVCRFSPESTYLVSGAADGSVVLWNVHSMKFYRS, VKDGSLVACAFSPGGNFFVTGSSCGDLTVWDDKMRCLCNE, AHDL…FLGG, GHSAPVLTCAFSYDGQMLVSGSVDKCVIIYETNTGNILHT, and QHTRYVTTCAFAPCSLFLATGSMDKTVHIWKLDNKQPCAG. The region spanning 333-396 is the SAM domain; sequence WSEDDVSAWL…LQKIEELRMK (64 aa). In terms of domain architecture, U-box spans 403–476; sequence AVPDEFLCPI…ISRWLETQQK (74 aa).

The polypeptide is WD repeat, SAM and U-box domain-containing protein 1 (WDSUB1) (Gallus gallus (Chicken)).